Here is a 226-residue protein sequence, read N- to C-terminus: 2-C-methyl-D-erythritol 4-phosphate cytidylyltransferase (226 aa).

This sequence belongs to the IspD/TarI cytidylyltransferase family. IspD subfamily.

The catalysed reaction is 2-C-methyl-D-erythritol 4-phosphate + CTP + H(+) = 4-CDP-2-C-methyl-D-erythritol + diphosphate. It participates in isoprenoid biosynthesis; isopentenyl diphosphate biosynthesis via DXP pathway; isopentenyl diphosphate from 1-deoxy-D-xylulose 5-phosphate: step 2/6. Its function is as follows. Catalyzes the formation of 4-diphosphocytidyl-2-C-methyl-D-erythritol from CTP and 2-C-methyl-D-erythritol 4-phosphate (MEP). The chain is 2-C-methyl-D-erythritol 4-phosphate cytidylyltransferase from Bacillus mycoides (strain KBAB4) (Bacillus weihenstephanensis).